The following is a 448-amino-acid chain: Probable 3-ketoacyl-CoA thiolase (448 aa).

Cys110 serves as the catalytic Acyl-thioester intermediate. Catalysis depends on proton acceptor residues His402 and Cys432.

Belongs to the thiolase-like superfamily. Thiolase family.

It is found in the mitochondrion. The catalysed reaction is an acyl-CoA + acetyl-CoA = a 3-oxoacyl-CoA + CoA. Its pathway is lipid metabolism; fatty acid beta-oxidation. In terms of biological role, mitochondrial enzyme that catalyzes reactions of the mitochondrial beta-oxidation pathway. The chain is Probable 3-ketoacyl-CoA thiolase from Caenorhabditis elegans.